We begin with the raw amino-acid sequence, 458 residues long: Cysteine protease ATG4C (458 aa).

Met-1 is modified (N-acetylmethionine). Cys-111 functions as the Nucleophile in the catalytic mechanism. Residues Asp-345 and His-347 contribute to the active site. The residue at position 451 (Ser-451) is a Phosphoserine. Thr-452 is subject to Phosphothreonine.

This sequence belongs to the peptidase C54 family.

It is found in the cytoplasm. The enzyme catalyses [protein]-C-terminal L-amino acid-glycyl-phosphatidylethanolamide + H2O = [protein]-C-terminal L-amino acid-glycine + a 1,2-diacyl-sn-glycero-3-phosphoethanolamine. Its activity is regulated as follows. Inhibited by N-ethylmaleimide. Cysteine protease that plays a key role in autophagy by mediating both proteolytic activation and delipidation of ATG8 family proteins. The protease activity is required for proteolytic activation of ATG8 family proteins: cleaves the C-terminal amino acid of ATG8 proteins MAP1LC3 and GABARAPL2, to reveal a C-terminal glycine. Exposure of the glycine at the C-terminus is essential for ATG8 proteins conjugation to phosphatidylethanolamine (PE) and insertion to membranes, which is necessary for autophagy. In addition to the protease activity, also mediates delipidation of ATG8 family proteins. Catalyzes delipidation of PE-conjugated forms of ATG8 proteins during macroautophagy. Compared to ATG4B, the major protein for proteolytic activation of ATG8 proteins, shows weaker ability to cleave the C-terminal amino acid of ATG8 proteins, while it displays stronger delipidation activity. In contrast to other members of the family, weakly or not involved in phagophore growth during mitophagy. This chain is Cysteine protease ATG4C, found in Homo sapiens (Human).